The sequence spans 370 residues: Putative agmatine deiminase (370 aa).

The active-site Amidino-cysteine intermediate is C361.

The protein belongs to the agmatine deiminase family.

It catalyses the reaction agmatine + H2O = N-carbamoylputrescine + NH4(+). This chain is Putative agmatine deiminase, found in Shewanella baltica (strain OS185).